Reading from the N-terminus, the 477-residue chain is Methylenetetrahydrofolate--tRNA-(uracil-5-)-methyltransferase TrmFO (477 aa).

Gly15–Gly20 provides a ligand contact to FAD.

It belongs to the MnmG family. TrmFO subfamily. The cofactor is FAD.

It is found in the cytoplasm. The enzyme catalyses uridine(54) in tRNA + (6R)-5,10-methylene-5,6,7,8-tetrahydrofolate + NADH + H(+) = 5-methyluridine(54) in tRNA + (6S)-5,6,7,8-tetrahydrofolate + NAD(+). It catalyses the reaction uridine(54) in tRNA + (6R)-5,10-methylene-5,6,7,8-tetrahydrofolate + NADPH + H(+) = 5-methyluridine(54) in tRNA + (6S)-5,6,7,8-tetrahydrofolate + NADP(+). Functionally, catalyzes the folate-dependent formation of 5-methyl-uridine at position 54 (M-5-U54) in all tRNAs. In Rhodopseudomonas palustris (strain BisB5), this protein is Methylenetetrahydrofolate--tRNA-(uracil-5-)-methyltransferase TrmFO.